The primary structure comprises 93 residues: Large ribosomal subunit protein uL23 (93 aa).

This sequence belongs to the universal ribosomal protein uL23 family. Part of the 50S ribosomal subunit. Contacts protein L29, and trigger factor when it is bound to the ribosome.

One of the early assembly proteins it binds 23S rRNA. One of the proteins that surrounds the polypeptide exit tunnel on the outside of the ribosome. Forms the main docking site for trigger factor binding to the ribosome. The sequence is that of Large ribosomal subunit protein uL23 from Wolinella succinogenes (strain ATCC 29543 / DSM 1740 / CCUG 13145 / JCM 31913 / LMG 7466 / NCTC 11488 / FDC 602W) (Vibrio succinogenes).